Reading from the N-terminus, the 140-residue chain is Protein ApaG (140 aa).

Positions 13 to 137 (EARTRDIVVR…FSLHLPGAAM (125 aa)) constitute an ApaG domain.

The sequence is that of Protein ApaG from Caulobacter vibrioides (strain ATCC 19089 / CIP 103742 / CB 15) (Caulobacter crescentus).